A 398-amino-acid polypeptide reads, in one-letter code: 1,4-beta-D-glucan cellobiohydrolase CEL6C (398 aa).

A signal peptide spans 1–18 (MKITSSAAALALVASAVA). The N-linked (GlcNAc...) asparagine glycan is linked to Asn70. The active site involves Asp125. The active-site Proton donor is Asp170. Positions 218, 318, 346, and 350 each coordinate substrate.

It belongs to the glycosyl hydrolase 6 (cellulase B) family. In terms of processing, both N- and O-glycosylated.

The protein resides in the secreted. The catalysed reaction is Hydrolysis of (1-&gt;4)-beta-D-glucosidic linkages in cellulose and cellotetraose, releasing cellobiose from the non-reducing ends of the chains.. Functionally, exoglucanase that plays an important function in biomass degradation by catalyzing the hydrolysis of the non-reducing end beta-1,4-glucosidic linkages in cellulose and cellotetraose to release cellobiose. Hydrolyzes crystalline and amorphous cellulose but is inactive on hydroxyethyl cellulose, mannan, galactomannan, xyloglucan, arabinoxylan, arabinan, xylan, and pectin. In Podospora anserina (strain S / ATCC MYA-4624 / DSM 980 / FGSC 10383) (Pleurage anserina), this protein is 1,4-beta-D-glucan cellobiohydrolase CEL6C.